Consider the following 269-residue polypeptide: Nuclear egress protein 2 (269 aa).

Residues 1–247 lie on the Perinuclear space side of the membrane; it reads MSRRTYVRSE…VWKLALPVAN (247 aa). The helical transmembrane segment at 248–268 threads the bilayer; the sequence is VTYALFIVIVLVVVLGAVLFW. Lys-269 is a topological domain (nuclear).

This sequence belongs to the herpesviridae NEC2 protein family. In terms of assembly, forms a heterohexameric complex with NEC1. Phosphorylated.

It localises to the host nucleus inner membrane. In terms of biological role, plays an essential role in virion nuclear egress, the first step of virion release from infected cell. Within the host nucleus, NEC1 interacts with the newly formed capsid through the vertexes and directs it to the inner nuclear membrane by associating with NEC2. Induces the budding of the capsid at the inner nuclear membrane as well as its envelopment into the perinuclear space. There, the NEC1/NEC2 complex promotes the fusion of the enveloped capsid with the outer nuclear membrane and the subsequent release of the viral capsid into the cytoplasm where it will reach the secondary budding sites in the host Golgi or trans-Golgi network. The chain is Nuclear egress protein 2 from Homo sapiens (Human).